An 819-amino-acid chain; its full sequence is Endonuclease MutS2 (819 aa).

Residue 339 to 346 (GPNTGGKT) participates in ATP binding. The Smr domain maps to 744-819 (VDVRGLRVDE…GAGVTVAELA (76 aa)).

This sequence belongs to the DNA mismatch repair MutS family. MutS2 subfamily. As to quaternary structure, homodimer. Binds to stalled ribosomes, contacting rRNA.

Functionally, endonuclease that is involved in the suppression of homologous recombination and thus may have a key role in the control of bacterial genetic diversity. In terms of biological role, acts as a ribosome collision sensor, splitting the ribosome into its 2 subunits. Detects stalled/collided 70S ribosomes which it binds and splits by an ATP-hydrolysis driven conformational change. Acts upstream of the ribosome quality control system (RQC), a ribosome-associated complex that mediates the extraction of incompletely synthesized nascent chains from stalled ribosomes and their subsequent degradation. Probably generates substrates for RQC. This chain is Endonuclease MutS2, found in Gemmatimonas aurantiaca (strain DSM 14586 / JCM 11422 / NBRC 100505 / T-27).